The sequence spans 450 residues: Enolase (450 aa).

Gln167 is a (2R)-2-phosphoglycerate binding site. Glu209 (proton donor) is an active-site residue. The Mg(2+) site is built by Asp250, Glu307, and Asp334. (2R)-2-phosphoglycerate-binding residues include Lys359, Arg388, Ser389, and Lys410. Catalysis depends on Lys359, which acts as the Proton acceptor.

This sequence belongs to the enolase family. Mg(2+) is required as a cofactor.

Its subcellular location is the cytoplasm. It is found in the secreted. The protein localises to the cell surface. It catalyses the reaction (2R)-2-phosphoglycerate = phosphoenolpyruvate + H2O. The protein operates within carbohydrate degradation; glycolysis; pyruvate from D-glyceraldehyde 3-phosphate: step 4/5. Catalyzes the reversible conversion of 2-phosphoglycerate (2-PG) into phosphoenolpyruvate (PEP). It is essential for the degradation of carbohydrates via glycolysis. Its function is as follows. 'Moonlights' as a plasminogen receptor and plasmin activator. Contributes to host (pig) cell adhesion; anti-enolase antibodies decrease binding to porcine kidney cells about 60%. Binds host plasminogen and fibronectin in vitro; enhances the activity of host tissue-specific plasminogen activator (tPA), and helps plasminogen and tPA degrade articifial host extracellular matrices. This Mesomycoplasma hyorhinis (strain HUB-1) (Mycoplasma hyorhinis) protein is Enolase.